A 136-amino-acid chain; its full sequence is Putative zinc finger protein 818 (136 aa).

The C2H2-type 1; degenerate zinc finger occupies 64–83 (NVCGKVLSQNSHLVNHQRIH). The segment at 89–111 (YRCHECGKAFTQGSRFINHQIVH) adopts a C2H2-type 2 zinc-finger fold.

Belongs to the krueppel C2H2-type zinc-finger protein family.

The protein localises to the nucleus. Functionally, may be involved in transcriptional regulation. This chain is Putative zinc finger protein 818 (ZNF818P), found in Homo sapiens (Human).